Here is a 358-residue protein sequence, read N- to C-terminus: NADH-quinone oxidoreductase subunit H (358 aa).

Helical transmembrane passes span I20–I40, A95–I115, I128–G148, I168–M188, V206–V226, G253–L273, T295–I315, and V334–L354.

Belongs to the complex I subunit 1 family. As to quaternary structure, NDH-1 is composed of 14 different subunits. Subunits NuoA, H, J, K, L, M, N constitute the membrane sector of the complex.

The protein localises to the cell inner membrane. The enzyme catalyses a quinone + NADH + 5 H(+)(in) = a quinol + NAD(+) + 4 H(+)(out). NDH-1 shuttles electrons from NADH, via FMN and iron-sulfur (Fe-S) centers, to quinones in the respiratory chain. The immediate electron acceptor for the enzyme in this species is believed to be ubiquinone. Couples the redox reaction to proton translocation (for every two electrons transferred, four hydrogen ions are translocated across the cytoplasmic membrane), and thus conserves the redox energy in a proton gradient. This subunit may bind ubiquinone. The chain is NADH-quinone oxidoreductase subunit H from Neisseria gonorrhoeae (strain ATCC 700825 / FA 1090).